A 963-amino-acid polypeptide reads, in one-letter code: MSPMDLQESAAALVRQLGERVEDRRGFGFMSPAIYDTAWVSMISKTIDDQKTWLFAECFQYILSHQLEDGGWAMYASEIDAILNTSASLLSLKRHLSNPYQITSITQEDLSARINRAQNALQKLLNEWNVDSTLHVGFEILVPALLRYLEDEGIAFAFSGRERLLEIEKQKLSKFKAQYLYLPIKVTALHSLEAFIGAIEFDKVSHHKVSGAFMASPSSTAAYMMHATQWDDECEDYLRHVIAHASGKGSGGVPSAFPSTIFESVWPLSTLLKVGYDLNSAPFIEKIRSYLHDAYIAEKGILGFTPFVGADADDTATTILVLNLLNQPVSVDAMLKEFEEEHHFKTYSQERNPSFSANCNVLLALLYSQEPSLYSAQIEKAIRFLYKQFTDSEMDVRDKWNLSPYYSWMLMTQAITRLTTLQKTSKLSTLRDDSISKGLISLLFRIASTVVKDQKPGGSWGTRASKEETAYAVLILTYAFYLDEVTESLRHDIKIAIENGCSFLSERTMQSDSEWLWVEKVTYKSEVLSEAYILAALKRAADLPDENAEAAPVINGISTNGFEHTDRINGKLKVNGTNGTNGSHETNGINGTHEIEQINGVNGTNGHSDVPHDTNGWVEEPTAINETNGHYVNGTNHETPLTNGISNGDSVSVHTDHSDSYYQRSDWTADEEQILLGPFDYLESLPGKNMRSQLIQSFNTWLKVPTESLDVIIKVISMLHTASLLIDDIQDQSILRRGQPVAHSIFGTAQAMNSGNYVYFLALREVQKLQNPKAISIYVDSLIDLHRGQGMELFWRDSLMCPTEEQYLDMVANKTGGLFCLAIQLMQAEATIQVDFIPLVRLLGIIFQICDDYLNLKSTAYTDNKGLCEDLTEGKFSFPIIHSIRSNPGNRQLINILKQKPREDDIKRYALSYMESTNSFEYTRGVVRKLKTEAIDTIQGLEKHGLEENIGIRKILARMSLEL.

Positions 1–539 (MSPMDLQESA…EAYILAALKR (539 aa)) are type II terpene cyclase (TC). Residues 227 to 292 (ATQWDDECED…FIEKIRSYLH (66 aa)) are substrate binding. Mg(2+)-binding residues include D311 and D314. The short motif at 311–314 (DADD) is the DXDD element. Positions 333–341 (AMLKEFEEE) match the NSE/DTE motif. Substrate contacts are provided by residues 337–341 (EFEEE) and 521–522 (VT). Residues 540–659 (AADLPDENAE…SVSVHTDHSD (120 aa)) are linker. Positions 627 to 648 (TNGHYVNGTNHETPLTNGISNG) are enriched in polar residues. The segment at 627-657 (TNGHYVNGTNHETPLTNGISNGDSVSVHTDH) is disordered. The segment at 660-963 (SYYQRSDWTA…KILARMSLEL (304 aa)) is geranylfarnesyl diphosphate synthase (PT). The isopentenyl diphosphate site is built by K688, R691, and H720. 2 residues coordinate Mg(2+): D727 and D731. Positions 727–731 (DDIQD) match the DDXXD 1 motif. R736 is a dimethylallyl diphosphate binding site. An isopentenyl diphosphate-binding site is contributed by R737. Residues K814, T815, Q848, N855, K865, and K875 each contribute to the dimethylallyl diphosphate site. The DDXXD 2 signature appears at 851–855 (DDYLN).

It in the N-terminal section; belongs to the terpene synthase family. This sequence in the C-terminal section; belongs to the FPP/GGPP synthase family. In terms of assembly, homohexamer. It depends on Mg(2+) as a cofactor.

The catalysed reaction is isopentenyl diphosphate + (2E,6E)-farnesyl diphosphate = (2E,6E,10E)-geranylgeranyl diphosphate + diphosphate. It catalyses the reaction (2E,6E,10E)-geranylgeranyl diphosphate = (+)-copalyl diphosphate. In terms of biological role, bifunctional terpene synthase that possesses both prenyltransferase and type II terpene cyclase activity, converting isopentenyl diphosphate (IPP) and dimethylallyl diphosphate (DMAPP) into geranylgeranyl diphosphate (GGPP) and further converting GGPP into copalyl diphosphate, respectively. The polypeptide is Copalyl diphosphate synthase (Talaromyces verruculosus (Penicillium verruculosum)).